A 233-amino-acid chain; its full sequence is Phosphatidylserine decarboxylase proenzyme (233 aa).

S190 serves as the catalytic Schiff-base intermediate with substrate; via pyruvic acid. S190 carries the pyruvic acid (Ser); by autocatalysis modification.

Belongs to the phosphatidylserine decarboxylase family. PSD-A subfamily. As to quaternary structure, heterodimer of a large membrane-associated beta subunit and a small pyruvoyl-containing alpha subunit. Requires pyruvate as cofactor. Is synthesized initially as an inactive proenzyme. Formation of the active enzyme involves a self-maturation process in which the active site pyruvoyl group is generated from an internal serine residue via an autocatalytic post-translational modification. Two non-identical subunits are generated from the proenzyme in this reaction, and the pyruvate is formed at the N-terminus of the alpha chain, which is derived from the carboxyl end of the proenzyme. The post-translation cleavage follows an unusual pathway, termed non-hydrolytic serinolysis, in which the side chain hydroxyl group of the serine supplies its oxygen atom to form the C-terminus of the beta chain, while the remainder of the serine residue undergoes an oxidative deamination to produce ammonia and the pyruvoyl prosthetic group on the alpha chain.

The protein resides in the cell membrane. It catalyses the reaction a 1,2-diacyl-sn-glycero-3-phospho-L-serine + H(+) = a 1,2-diacyl-sn-glycero-3-phosphoethanolamine + CO2. The protein operates within phospholipid metabolism; phosphatidylethanolamine biosynthesis; phosphatidylethanolamine from CDP-diacylglycerol: step 2/2. Catalyzes the formation of phosphatidylethanolamine (PtdEtn) from phosphatidylserine (PtdSer). The protein is Phosphatidylserine decarboxylase proenzyme of Xanthobacter autotrophicus (strain ATCC BAA-1158 / Py2).